Consider the following 151-residue polypeptide: Macrodomain Ter protein (151 aa).

This sequence belongs to the MatP family. Homodimer.

The protein localises to the cytoplasm. Functionally, required for spatial organization of the terminus region of the chromosome (Ter macrodomain) during the cell cycle. Prevents early segregation of duplicated Ter macrodomains during cell division. Binds specifically to matS, which is a 13 bp signature motif repeated within the Ter macrodomain. In Yersinia enterocolitica serotype O:8 / biotype 1B (strain NCTC 13174 / 8081), this protein is Macrodomain Ter protein.